The following is a 598-amino-acid chain: Vacuolin-A (598 aa).

Residues 482–539 are a coiled coil; that stretch reads IKTTEARLKAETDNIALEQRNKAIISESQAKLSSAQREAESLLITAEAQKKASELQGE.

It belongs to the vacuolin family.

The protein resides in the endosome membrane. It localises to the lysosome. The sequence is that of Vacuolin-A (vacA) from Dictyostelium discoideum (Social amoeba).